A 96-amino-acid polypeptide reads, in one-letter code: Co-chaperonin GroES (96 aa).

The protein belongs to the GroES chaperonin family. In terms of assembly, heptamer of 7 subunits arranged in a ring. Interacts with the chaperonin GroEL.

It localises to the cytoplasm. Its function is as follows. Together with the chaperonin GroEL, plays an essential role in assisting protein folding. The GroEL-GroES system forms a nano-cage that allows encapsulation of the non-native substrate proteins and provides a physical environment optimized to promote and accelerate protein folding. GroES binds to the apical surface of the GroEL ring, thereby capping the opening of the GroEL channel. The protein is Co-chaperonin GroES of Hahella chejuensis (strain KCTC 2396).